Consider the following 64-residue polypeptide: RPNWEERSRLCGRDLIRAFIYLCGGTRWTRLPNFGNYPIMEEKMGFAKKCCAIGCSTEDFRMVC.

Cystine bridges form between Cys-11/Cys-51, Cys-23/Cys-64, and Cys-50/Cys-55.

The protein belongs to the insulin family. As to quaternary structure, heterodimer of a B chain and an A chain linked by two disulfide bonds.

Its subcellular location is the secreted. The chain is Relaxin from Leucoraja erinaceus (Little skate).